The primary structure comprises 274 residues: uncharacterized protein (274 aa).

It localises to the plastid. It is found in the chloroplast. This is an uncharacterized protein from Euglena gracilis.